The following is a 156-amino-acid chain: Small ribosomal subunit protein uS7 (156 aa).

Belongs to the universal ribosomal protein uS7 family. As to quaternary structure, part of the 30S ribosomal subunit. Contacts proteins S9 and S11.

Functionally, one of the primary rRNA binding proteins, it binds directly to 16S rRNA where it nucleates assembly of the head domain of the 30S subunit. Is located at the subunit interface close to the decoding center, probably blocks exit of the E-site tRNA. In Haemophilus influenzae (strain 86-028NP), this protein is Small ribosomal subunit protein uS7.